A 559-amino-acid chain; its full sequence is Asparagine--tRNA ligase, cytoplasmic (559 aa).

The residue at position 72 (Ser-72) is a Phosphoserine. Residues 82 to 102 (HREQMKNDSREKKEAEDNLRR) are disordered. At Lys-255 the chain carries N6-acetyllysine. Ser-493 is modified (phosphoserine). Lys-501 bears the N6-acetyllysine mark.

This sequence belongs to the class-II aminoacyl-tRNA synthetase family. As to quaternary structure, homodimer.

Its subcellular location is the cytoplasm. The catalysed reaction is tRNA(Asn) + L-asparagine + ATP = L-asparaginyl-tRNA(Asn) + AMP + diphosphate + H(+). Functionally, catalyzes the attachment of asparagine to tRNA(Asn) in a two-step reaction: asparagine is first activated by ATP to form Asn-AMP and then transferred to the acceptor end of tRNA(Asn). In addition to its essential role in protein synthesis, acts as a signaling molecule that induced migration of CCR3-expressing cells. Has an essential role in the development of the cerebral cortex, being required for proper proliferation of radial glial cells. This chain is Asparagine--tRNA ligase, cytoplasmic, found in Mus musculus (Mouse).